The following is a 345-amino-acid chain: Ferrochelatase (345 aa).

2 residues coordinate Fe cation: His215 and Glu296.

It belongs to the ferrochelatase family.

The protein localises to the cytoplasm. The enzyme catalyses heme b + 2 H(+) = protoporphyrin IX + Fe(2+). It participates in porphyrin-containing compound metabolism; protoheme biosynthesis; protoheme from protoporphyrin-IX: step 1/1. Functionally, catalyzes the ferrous insertion into protoporphyrin IX. The polypeptide is Ferrochelatase (Rhodopseudomonas palustris (strain HaA2)).